A 116-amino-acid chain; its full sequence is Large ribosomal subunit protein uL14m (116 aa).

It belongs to the universal ribosomal protein uL14 family.

Its subcellular location is the mitochondrion. The chain is Large ribosomal subunit protein uL14m (RPL14) from Acanthamoeba polyphaga (Amoeba).